Here is a 338-residue protein sequence, read N- to C-terminus: Bifunctional methylenetetrahydrofolate dehydrogenase/cyclohydrolase 2, mitochondrial (338 aa).

Substrate is bound by residues 89–93 (YVRNK) and 136–138 (VQL). NAD(+) is bound by residues 205-207 (GRS) and Arg-238. Substrate is bound at residue 314–318 (PGGVG).

The protein belongs to the tetrahydrofolate dehydrogenase/cyclohydrolase family. Mg(2+) is required as a cofactor. As to expression, widely expressed.

It is found in the mitochondrion inner membrane. It carries out the reaction (6R)-5,10-methylene-5,6,7,8-tetrahydrofolate + NADP(+) = (6R)-5,10-methenyltetrahydrofolate + NADPH. The catalysed reaction is (6R)-5,10-methylene-5,6,7,8-tetrahydrofolate + NAD(+) = (6R)-5,10-methenyltetrahydrofolate + NADH. The enzyme catalyses (6R)-5,10-methenyltetrahydrofolate + H2O = (6R)-10-formyltetrahydrofolate + H(+). The protein operates within one-carbon metabolism; tetrahydrofolate interconversion. Bifunctional mitochondrial folate-interconverting enzyme that has both NAD/NADP-dependent methylenetetrahydrofolate dehydrogenase and methenyltetrahydrofolate cyclohydrolase activities. Its function is as follows. Has no NAD/NADP-dependent methylenetetrahydrofolate dehydrogenase activity. This is Bifunctional methylenetetrahydrofolate dehydrogenase/cyclohydrolase 2, mitochondrial from Rattus norvegicus (Rat).